The chain runs to 234 residues: 1-(5-phosphoribosyl)-5-[(5-phosphoribosylamino)methylideneamino] imidazole-4-carboxamide isomerase (234 aa).

Residue Asp9 is the Proton acceptor of the active site. Residue Asp131 is the Proton donor of the active site.

The protein belongs to the HisA/HisF family.

It is found in the cytoplasm. The catalysed reaction is 1-(5-phospho-beta-D-ribosyl)-5-[(5-phospho-beta-D-ribosylamino)methylideneamino]imidazole-4-carboxamide = 5-[(5-phospho-1-deoxy-D-ribulos-1-ylimino)methylamino]-1-(5-phospho-beta-D-ribosyl)imidazole-4-carboxamide. It participates in amino-acid biosynthesis; L-histidine biosynthesis; L-histidine from 5-phospho-alpha-D-ribose 1-diphosphate: step 4/9. The sequence is that of 1-(5-phosphoribosyl)-5-[(5-phosphoribosylamino)methylideneamino] imidazole-4-carboxamide isomerase from Staphylococcus aureus (strain MRSA252).